A 179-amino-acid chain; its full sequence is Large ribosomal subunit protein uL6 (179 aa).

Belongs to the universal ribosomal protein uL6 family. As to quaternary structure, part of the 50S ribosomal subunit.

Its function is as follows. This protein binds to the 23S rRNA, and is important in its secondary structure. It is located near the subunit interface in the base of the L7/L12 stalk, and near the tRNA binding site of the peptidyltransferase center. This is Large ribosomal subunit protein uL6 from Leptospira interrogans serogroup Icterohaemorrhagiae serovar copenhageni (strain Fiocruz L1-130).